Consider the following 124-residue polypeptide: Small ribosomal subunit protein uS13 (124 aa).

The tract at residues 87–124 (GSYRGNRHRKRLPVRGQRTKTNSRTRKGKRRTVGSKTK) is disordered. A compositionally biased stretch (basic residues) spans 91 to 124 (GNRHRKRLPVRGQRTKTNSRTRKGKRRTVGSKTK).

Belongs to the universal ribosomal protein uS13 family. In terms of assembly, part of the 30S ribosomal subunit. Forms a loose heterodimer with protein S19. Forms two bridges to the 50S subunit in the 70S ribosome.

Its function is as follows. Located at the top of the head of the 30S subunit, it contacts several helices of the 16S rRNA. In the 70S ribosome it contacts the 23S rRNA (bridge B1a) and protein L5 of the 50S subunit (bridge B1b), connecting the 2 subunits; these bridges are implicated in subunit movement. Contacts the tRNAs in the A and P-sites. In Elusimicrobium minutum (strain Pei191), this protein is Small ribosomal subunit protein uS13.